The primary structure comprises 493 residues: Poly(ribitol-phosphate) alpha-N-acetylglucosaminyltransferase (493 aa).

UDP-N-acetyl-alpha-D-glucosamine contacts are provided by residues glycine 17, lysine 59, histidine 249, arginine 326, lysine 331, threonine 383, and 403–411 (EGQGLSMIE).

It belongs to the glycosyltransferase group 1 family. Homotrimer.

It localises to the cytoplasm. The catalysed reaction is 4-O-[(D-ribitylphospho)(n)-di{(2R)-glycerylphospho}]-N-acetyl-beta-D-mannosaminyl-(1-&gt;4)-N-acetyl-alpha-D-glucosaminyl di-trans,octa-cis-undecaprenyl diphosphate + n UDP-N-acetyl-alpha-D-glucosamine = 4-O-([2-N-acetyl-alpha-D-glucosaminyl-1-D-ribitylphospho](n)-di{[2R]-1-glycerylphospho})-N-acetyl-beta-D-mannosaminyl-(1-&gt;4)-N-acetyl-alpha-D-glucosaminyl di-trans,octa-cis-undecaprenyl diphosphate + n UDP + n H(+). It functions in the pathway cell wall biogenesis; poly(ribitol phosphate) teichoic acid biosynthesis. Its function is as follows. Attaches N-acetyl-alpha-D-glucosamine residues to poly(RboP)-wall teichoic acids (WTAs). This Staphylococcus aureus (strain COL) protein is Poly(ribitol-phosphate) alpha-N-acetylglucosaminyltransferase.